The sequence spans 356 residues: Protein pelota homolog (356 aa).

It belongs to the eukaryotic release factor 1 family. Pelota subfamily. In terms of assembly, monomer. The cofactor is a divalent metal cation.

It localises to the cytoplasm. Functionally, may function in recognizing stalled ribosomes, interact with stem-loop structures in stalled mRNA molecules, and effect endonucleolytic cleavage of the mRNA. May play a role in the release non-functional ribosomes and degradation of damaged mRNAs. Has endoribonuclease activity. This chain is Protein pelota homolog, found in Pyrococcus horikoshii (strain ATCC 700860 / DSM 12428 / JCM 9974 / NBRC 100139 / OT-3).